Consider the following 175-residue polypeptide: Alpha-crystallin B chain (175 aa).

Methionine 1 is subject to N-acetylmethionine. Position 19 is a phosphoserine (serine 19). O-linked (GlcNAc) serine glycosylation is present at serine 41. Phosphoserine occurs at positions 45 and 59. The sHSP domain occupies 56 to 164 (RAPSWIDTGL…PERTIPITRE (109 aa)). Histidine 83 contacts Zn(2+). A glycan (N-linked (Glc) (glycation) lysine) is linked at lysine 90. Lysine 92 is modified (N6-acetyllysine; alternate). Lysine 92 carries N-linked (Glc) (glycation) lysine; alternate glycosylation. Zn(2+)-binding residues include histidine 104, glutamate 106, histidine 111, and histidine 119. Positions 144-175 (TVNGPRKQASGPERTIPITREEKPAVTAAPKK) are disordered. Lysine 166 carries the N6-acetyllysine modification. The O-linked (GlcNAc) threonine glycan is linked to threonine 170.

The protein belongs to the small heat shock protein (HSP20) family. Heteromer composed of three CRYAA and one CRYAB subunits. Aggregates with homologous proteins, including the small heat shock protein HSPB1, to form large heteromeric complexes. Inter-subunit bridging via zinc ions enhances stability, which is crucial as there is no protein turn over in the lens. Interacts with HSPBAP1 and TTN/titin. Interacts with TMEM109; in the cellular response to DNA damage. Interacts with DES; binds rapidly during early stages of DES filament assembly and a reduced binding seen in the later stages. Interacts with TMED10; the interaction mediates the translocation from the cytoplasm into the ERGIC (endoplasmic reticulum-Golgi intermediate compartment) and thereby secretion. Interacts with ATP6V1A and with MTOR, forming a ternary complex. It is not known whether either Lys-90, or Lys-92, or both are glycated. In terms of tissue distribution, lens as well as other tissues.

Its subcellular location is the cytoplasm. It localises to the nucleus. It is found in the secreted. The protein resides in the lysosome. Its function is as follows. May contribute to the transparency and refractive index of the lens. Has chaperone-like activity, preventing aggregation of various proteins under a wide range of stress conditions. In lens epithelial cells, stabilizes the ATP6V1A protein, preventing its degradation by the proteasome. This chain is Alpha-crystallin B chain (CRYAB), found in Bos taurus (Bovine).